The chain runs to 338 residues: Ketol-acid reductoisomerase (NADP(+)) (338 aa).

The KARI N-terminal Rossmann domain maps to Met1–Thr181. Residues Tyr24 to Gln27, Arg47, Ser50, Thr52, and Asp82 to Gln85 each bind NADP(+). The active site involves His107. Gly133 provides a ligand contact to NADP(+). In terms of domain architecture, KARI C-terminal knotted spans Thr182 to Ile327. Mg(2+) is bound by residues Asp190, Glu194, Glu226, and Glu230. Residue Ser251 participates in substrate binding.

Belongs to the ketol-acid reductoisomerase family. Mg(2+) serves as cofactor.

It carries out the reaction (2R)-2,3-dihydroxy-3-methylbutanoate + NADP(+) = (2S)-2-acetolactate + NADPH + H(+). The catalysed reaction is (2R,3R)-2,3-dihydroxy-3-methylpentanoate + NADP(+) = (S)-2-ethyl-2-hydroxy-3-oxobutanoate + NADPH + H(+). It functions in the pathway amino-acid biosynthesis; L-isoleucine biosynthesis; L-isoleucine from 2-oxobutanoate: step 2/4. It participates in amino-acid biosynthesis; L-valine biosynthesis; L-valine from pyruvate: step 2/4. In terms of biological role, involved in the biosynthesis of branched-chain amino acids (BCAA). Catalyzes an alkyl-migration followed by a ketol-acid reduction of (S)-2-acetolactate (S2AL) to yield (R)-2,3-dihydroxy-isovalerate. In the isomerase reaction, S2AL is rearranged via a Mg-dependent methyl migration to produce 3-hydroxy-3-methyl-2-ketobutyrate (HMKB). In the reductase reaction, this 2-ketoacid undergoes a metal-dependent reduction by NADPH to yield (R)-2,3-dihydroxy-isovalerate. This is Ketol-acid reductoisomerase (NADP(+)) from Ectopseudomonas mendocina (strain ymp) (Pseudomonas mendocina).